Here is a 110-residue protein sequence, read N- to C-terminus: tRNA-binding protein YgjH (110 aa).

Residues 8–110 (DFARLEMRVG…RMMPAGVRVV (103 aa)) form the tRNA-binding domain.

Homodimer.

The chain is tRNA-binding protein YgjH (ygjH) from Escherichia coli (strain K12).